The sequence spans 542 residues: Leucine-rich repeat-containing protein 56 (542 aa).

LRR repeat units follow at residues Asn94 to Leu115, His117 to Pro138, Ala139 to Glu160, Gln161 to Gln182, and Arg186 to Thr206. Positions Asn207–Leu250 constitute an LRRCT domain. Disordered stretches follow at residues Leu308 to Ser377, Leu396 to Arg475, and Arg507 to Thr542. Positions Arg416–Glu426 are enriched in basic and acidic residues. The segment covering Pro522–Ala532 has biased composition (low complexity).

Belongs to the LRRC56 family. In terms of assembly, interacts with IFT88.

It localises to the cell projection. Its subcellular location is the cilium. Required for the assembly of dynein arms. In Homo sapiens (Human), this protein is Leucine-rich repeat-containing protein 56 (LRRC56).